The following is a 400-amino-acid chain: Glycine betaine/proline betaine transport system ATP-binding protein ProV (400 aa).

One can recognise an ABC transporter domain in the interval Leu-29–Phe-265. Gly-61–Ser-68 contributes to the ATP binding site. CBS domains follow at residues Ala-280–Ala-341 and Leu-343–Gly-400.

The protein belongs to the ABC transporter superfamily. In terms of assembly, the complex is composed of two ATP-binding proteins (ProV), two transmembrane proteins (ProW) and a solute-binding protein (ProX).

It is found in the cell inner membrane. Functionally, part of the ProU ABC transporter complex involved in glycine betaine and proline betaine uptake. Probably responsible for energy coupling to the transport system. The sequence is that of Glycine betaine/proline betaine transport system ATP-binding protein ProV from Salmonella typhimurium (strain LT2 / SGSC1412 / ATCC 700720).